Reading from the N-terminus, the 877-residue chain is MSELSESGSYNSYNSLSAGSPLPLQEIFNGAETKCQSHYLQSRINTNYEQVKQQLKESAEKKNSSKIYSSLQHLTYYKVEKDLLETILRIIDITDDKKTLRLAYYFLGEISQFKHLINNSTEIKNITTIFNKEMQHKDISRKVVSLKTTASVAPNDVLIDANILDVISGILRKVGEDPDKTQKKKGFFTRATTDLGRERSLLQYSCFVACRNRYKNNPSLFMPIVEGIKCVDPVGARHAVSLTLNYALENPSTVAATTKRFIPLLKANKGKEAVYLVDPFARRNFIKLCGHLAATPSPIGNVITMENKDFFQSLCQSVMDAHLSVAFYAINVLSRFSWPTLESAHIDAIQFDSELPHFESLAFQTSLIVGICNKMRIGFNTYSIGAYSNYSMQHGHHHLHHYHQGGSGTVGGSVPSSSSSSSSSSNITTSALSSGSSSNSSLSSQQLLLVQQQQQQLLHQQSNPFLHLACKLISVLSQSYVKYSYPKDSTTQQPIIGDWSFDEKQYQHQSVYPYHHNLSPFTGLPNPISNNNNSSNNTKDQSTTTTTSTTSSSSNSIHPFSSLTQLILNLLNISPSISIRIQALKALVWLCPSNLDQSKLYLETFRSQLRDPYHPTHLFKELFLELYKRIIATPILSPMILELVYDWIDIIPSKCDTSLVCEIWKTIVEFGKVFANEKLLASIFKILDRIVHPDFRVLAMEIQKDIIKFLGEYSNQITFEQPSRFEQCKSRSGSNQQQHLSNMSLNSIIQRLQQYSIFSPWQIRLESIDSLAKIAFQSSTVVKVHIYNFLTLLPNESHGWTTVKSNTSIIVNTLDQLLTCRAKWLPLFKSSDLSQNQIKDLKNDHTNLCLQIGLFFDQLSFDYLPLGIESKKYLGSK.

2 disordered regions span residues 398 to 437 (HLHH…SGSS) and 522 to 557 (TGLP…SNSI). 2 stretches are compositionally biased toward low complexity: residues 412-437 (GSVP…SGSS) and 529-556 (SNNN…SSNS).

As to quaternary structure, component of the TSET complex, a heterohexamer composed of tstA, tstB, tstC, tstD, tstE and tstF, which may act in plasma membrane turnover. tstA, tstB, tstC and tstD are likely to be the core complex members with tstE and tstF acting as associated scaffold proteins.

The sequence is that of TSET complex member tstB from Dictyostelium discoideum (Social amoeba).